The primary structure comprises 635 residues: Arabinoxylan arabinofuranohydrolase (635 aa).

Residues 1 to 26 form the signal peptide; the sequence is MIRKCLVLFLSFALLLSVFPMLNVDA. Residue Asp-49 is the Proton acceptor of the active site. Catalysis depends on Glu-248, which acts as the Proton donor. Asn-311 contributes to the substrate binding site. CBM6 domains lie at 379 to 508 and 517 to 634; these read TRVE…WQFT and TKVE…IEFS. Ca(2+) is bound by residues Glu-382, Glu-384, Asn-406, Leu-407, Asp-503, Glu-520, Glu-522, Asp-539, Tyr-544, Asp-620, Trp-624, Asp-625, and Asp-629.

Belongs to the glycosyl hydrolase 43 family.

The protein resides in the secreted. It carries out the reaction Hydrolysis of terminal non-reducing alpha-L-arabinofuranoside residues in alpha-L-arabinosides.. Its pathway is glycan degradation; xylan degradation. Its activity is regulated as follows. Activated by calcium and magnesium. Inhibited by copper. Functionally, cleaves arabinose units from O-2- or O-3-monosubstituted xylose residues, thereby assisting in arabinoxylan (AX) and short-chain arabinoxylo-oligosaccharide (AXOS) degradation. Preferres wheat flour xylan over oat spelt xylan as substrate. Does not display endoxylanase activity. The polypeptide is Arabinoxylan arabinofuranohydrolase (xynD) (Paenibacillus polymyxa (Bacillus polymyxa)).